The chain runs to 326 residues: Adenosine receptor A1 (326 aa).

The Extracellular portion of the chain corresponds to 1–10 (MPPSISAFQA). The chain crosses the membrane as a helical span at residues 11-33 (AYIGIEVLIALVSVPGNVLVIWA). The Cytoplasmic portion of the chain corresponds to 34 to 46 (VKVNQALRDATFC). A helical transmembrane segment spans residues 47 to 69 (FIVSLAVADVAVGALVIPLAILI). The Extracellular segment spans residues 70–80 (NIGPQTYFHTC). Cysteine 80 and cysteine 169 are disulfide-bonded. Residues 81 to 102 (LMVACPVLILTQSSILALLAIA) form a helical membrane-spanning segment. Residues 103–123 (VDRYLRVKIPLRYKMVVTPRR) lie on the Cytoplasmic side of the membrane. Residues 124–146 (AAVAIAGCWILSFVVGLTPMFGW) form a helical membrane-spanning segment. The Extracellular portion of the chain corresponds to 147–176 (NNLSAVERAWAANGSMGEPVIKCEFEKVIS). Asparagine 159 carries N-linked (GlcNAc...) asparagine glycosylation. Residues 177–201 (MEYMVYFNFFVWVLPPLLLMVLIYL) form a helical membrane-spanning segment. Residues 202 to 235 (EVFYLIRKQLNKKVSASSGDPQKYYGKELKIAKS) lie on the Cytoplasmic side of the membrane. A helical transmembrane segment spans residues 236 to 259 (LALILFLFALSWLPLHILNCITLF). The Extracellular segment spans residues 260–267 (CPSCHKPS). A helical membrane pass occupies residues 268-292 (ILTYIAIFLTHGNSAMNPIVYAFRI). The Cytoplasmic portion of the chain corresponds to 293 to 326 (QKFRVTFLKIWNDHFRCQPAPPIDEDLPEERPDD). Cysteine 309 carries the S-palmitoyl cysteine lipid modification.

Belongs to the G-protein coupled receptor 1 family.

It localises to the cell membrane. Receptor for adenosine. The activity of this receptor is mediated by G proteins which inhibit adenylyl cyclase. The sequence is that of Adenosine receptor A1 (ADORA1) from Homo sapiens (Human).